Here is a 245-residue protein sequence, read N- to C-terminus: Farnesol dehydrogenase (245 aa).

NAD(+) contacts are provided by residues 11 to 40 and Asp-64; that span reads VTGASSGIGAAITTDLAKAGMVVVGLARRV. Position 145 (Ser-145) interacts with substrate. Tyr-160 (proton acceptor) is an active-site residue. Position 164 (Lys-164) interacts with NAD(+).

Belongs to the short-chain dehydrogenases/reductases (SDR) family. As to quaternary structure, homodimer. Highly expressed level in the midgut and brain in adult females, and at lower level in the abdominal and thoracic ganglia. High levels are detected in corpora allata (CA), Malpighian tubules and fat body.

It catalyses the reaction (2E,6E)-farnesol + NADP(+) = (2E,6E)-farnesal + NADPH + H(+). Its function is as follows. Mediates oxidation of farnesol into farnesal, a precursor of juvenile hormone in the corpora allata (CA), the glands that synthesize juvenile hormone. Able to oxidize C(10) to C(15) isoprenoid and aliphatic alcohols. This is Farnesol dehydrogenase from Aedes aegypti (Yellowfever mosquito).